Here is a 133-residue protein sequence, read N- to C-terminus: Large ribosomal subunit protein uL11 (133 aa).

This sequence belongs to the universal ribosomal protein uL11 family. Part of the ribosomal stalk of the 50S ribosomal subunit. Interacts with L10 and the large rRNA to form the base of the stalk. L10 forms an elongated spine to which 2 L12 dimers bind in a sequential fashion forming a pentameric L10(L12)2(L12)2 complex. One or more lysine residues are methylated.

Forms part of the ribosomal stalk which helps the ribosome interact with GTP-bound translation factors. This chain is Large ribosomal subunit protein uL11, found in Geobacillus stearothermophilus (Bacillus stearothermophilus).